Here is a 212-residue protein sequence, read N- to C-terminus: Telomere repeats-binding bouquet formation protein 2 (212 aa).

It belongs to the TERB2 family. As to quaternary structure, component of the MAJIN-TERB1-TERB2 complex.

Meiosis-specific telomere-associated protein involved in meiotic telomere attachment to the nucleus inner membrane, a crucial step for homologous pairing and synapsis. Component of the MAJIN-TERB1-TERB2 complex, which promotes telomere cap exchange by mediating attachment of telomeric DNA to the inner nuclear membrane and replacement of the protective cap of telomeric chromosomes: in early meiosis, the MAJIN-TERB1-TERB2 complex associates with telomeric DNA and the shelterin/telosome complex. During prophase, the complex matures and promotes release of the shelterin/telosome complex from telomeric DNA. This Danio rerio (Zebrafish) protein is Telomere repeats-binding bouquet formation protein 2.